The chain runs to 71 residues: Exodeoxyribonuclease 7 small subunit (71 aa).

This sequence belongs to the XseB family. Heterooligomer composed of large and small subunits.

Its subcellular location is the cytoplasm. It carries out the reaction Exonucleolytic cleavage in either 5'- to 3'- or 3'- to 5'-direction to yield nucleoside 5'-phosphates.. Bidirectionally degrades single-stranded DNA into large acid-insoluble oligonucleotides, which are then degraded further into small acid-soluble oligonucleotides. The chain is Exodeoxyribonuclease 7 small subunit from Clostridium botulinum (strain 657 / Type Ba4).